The sequence spans 127 residues: HTH-type transcriptional regulator ImmR (127 aa).

A compositionally biased stretch (basic and acidic residues) spans 1–12 (MSLGKRLKEARQ). The interval 1-22 (MSLGKRLKEARQKAGYTQKEAA) is disordered. In terms of domain architecture, HTH cro/C1-type spans 7–61 (LKEARQKAGYTQKEAAEKLNIGNNNLSNYERDYRDPDTDTLLKLSNLYNVSTDYL). A DNA-binding region (H-T-H motif) is located at residues 18-37 (QKEAAEKLNIGNNNLSNYER).

The polypeptide is HTH-type transcriptional regulator ImmR (immR) (Bacillus subtilis (strain 168)).